The primary structure comprises 417 residues: Serine hydroxymethyltransferase (417 aa).

(6S)-5,6,7,8-tetrahydrofolate-binding positions include Leu121 and 125–127; that span reads GHL. At Lys229 the chain carries N6-(pyridoxal phosphate)lysine. 355–357 serves as a coordination point for (6S)-5,6,7,8-tetrahydrofolate; the sequence is SPF.

Belongs to the SHMT family. As to quaternary structure, homodimer. The cofactor is pyridoxal 5'-phosphate.

It localises to the cytoplasm. It carries out the reaction (6R)-5,10-methylene-5,6,7,8-tetrahydrofolate + glycine + H2O = (6S)-5,6,7,8-tetrahydrofolate + L-serine. Its pathway is one-carbon metabolism; tetrahydrofolate interconversion. It participates in amino-acid biosynthesis; glycine biosynthesis; glycine from L-serine: step 1/1. Catalyzes the reversible interconversion of serine and glycine with tetrahydrofolate (THF) serving as the one-carbon carrier. This reaction serves as the major source of one-carbon groups required for the biosynthesis of purines, thymidylate, methionine, and other important biomolecules. Also exhibits THF-independent aldolase activity toward beta-hydroxyamino acids, producing glycine and aldehydes, via a retro-aldol mechanism. This chain is Serine hydroxymethyltransferase, found in Xanthomonas euvesicatoria pv. vesicatoria (strain 85-10) (Xanthomonas campestris pv. vesicatoria).